Here is a 196-residue protein sequence, read N- to C-terminus: ECF RNA polymerase sigma factor SigM (196 aa).

The tract at residues 39–105 is sigma-70 factor domain-2; it reads LFRRHHRQLH…ACLDRLRRAK (67 aa). Positions 63–66 match the Polymerase core binding motif; it reads DALQ. The sigma-70 factor domain-4 stretch occupies residues 130 to 181; that stretch reads AVQRALMRLPVEQRAAVVAVDMQGYSIADTARMLGVAEGTVKSRCARARARL. The segment at residues 156–175 is a DNA-binding region (H-T-H motif); it reads IADTARMLGVAEGTVKSRCA.

Belongs to the sigma-70 factor family. ECF subfamily. Interacts transiently with the RNA polymerase catalytic core formed by RpoA, RpoB, RpoC and RpoZ (2 alpha, 1 beta, 1 beta' and 1 omega subunit) to form the RNA polymerase holoenzyme that can initiate transcription. Interacts (via sigma-70 factor domain-4) with anti-sigma-M factor RsmA (AC L7N5D7).

Its function is as follows. Sigma factors are initiation factors that promote the attachment of RNA polymerase to specific initiation sites and are then released. Extracytoplasmic function (ECF) sigma factors are held in an inactive form by an anti-sigma factor (RsaM, AC L7N5D7) until released by regulated intramembrane proteolysis. This sigma factor is required for the synthesis of surface or secreted molecules. This chain is ECF RNA polymerase sigma factor SigM (sigM), found in Mycobacterium tuberculosis (strain ATCC 25618 / H37Rv).